Consider the following 329-residue polypeptide: MIRNPNYTNFVCCAVCNKIIPPAPFGETFKRIHEYKPFKTRFYTHKDILDIGKDILNKEEQFQEDALKERIAQAEADIWAKADERQRQAVKKALEEANDMYKMQIQFLKEEHEKELKEMATRTKMQLHKNLEEELQREHLAAEQRMVHRIQRIMMECHREKVQAVQEAREQERLMAQEEIQSQRRKAMEELMSSGVTVVKDQKKNVNQLIKEKQHEMNLYYCMTQRQKQEEVQEVLQEAEKTHQAKLGSVMDKLVNTQGELLSIAKQLGIMTNWKDFLEEELQETRAAFQKYINYTFPKLSPGHADFILPERKKTPSNLIIPENQTTPD.

Residues 56–247 (LNKEEQFQED…EAEKTHQAKL (192 aa)) adopt a coiled-coil conformation.

This is an uncharacterized protein from Bos taurus (Bovine).